The following is a 69-amino-acid chain: Neurotoxin Cex7 (69 aa).

A signal peptide is located at residue A1. An LCN-type CS-alpha/beta domain is found at 2–67 (REGYLVSKST…TYPIPGKSCG (66 aa)). Cystine bridges form between C13–C66, C17–C42, C26–C47, and C30–C49. C66 bears the Cysteine amide mark. Positions 67–69 (GKK) are excised as a propeptide.

The protein belongs to the long (4 C-C) scorpion toxin superfamily. Sodium channel inhibitor family. Beta subfamily. In terms of tissue distribution, expressed by the venom gland.

The protein resides in the secreted. Its function is as follows. Beta toxins bind voltage-independently at site-4 of sodium channels (Nav) and shift the voltage of activation toward more negative potentials thereby affecting sodium channel activation and promoting spontaneous and repetitive firing. In Centruroides exilicauda (Bark scorpion), this protein is Neurotoxin Cex7.